The following is an 80-amino-acid chain: MSSDSNFDPWIPVCVVVVMTSVVLFAGLHVYLWYVRRQLVAFCLEKVCVRCCGKDETTPLVEDAEPPAELEMVEVSDECY.

The helical transmembrane segment at 10-30 (WIPVCVVVVMTSVVLFAGLHV) threads the bilayer.

The protein localises to the host membrane. Functionally, plays a role in the down-regulation of the host NKG2D ligand MICA by utilizing the lysosomal pathway for its degradation. In turn, MICA reduction diminishes NK-cell killing of HCMV-infected cells. This Human cytomegalovirus (strain Merlin) (HHV-5) protein is Protein UL148A (UL148A).